A 156-amino-acid chain; its full sequence is Small ribosomal subunit protein uS7 (156 aa).

Belongs to the universal ribosomal protein uS7 family. As to quaternary structure, part of the 30S ribosomal subunit. Contacts proteins S9 and S11.

One of the primary rRNA binding proteins, it binds directly to 16S rRNA where it nucleates assembly of the head domain of the 30S subunit. Is located at the subunit interface close to the decoding center, probably blocks exit of the E-site tRNA. The chain is Small ribosomal subunit protein uS7 from Nitratiruptor sp. (strain SB155-2).